The sequence spans 560 residues: Kinesin light chain 1 (560 aa).

Residues 31 to 99 (VIQGLEALKN…MALSNHLNAV (69 aa)) adopt a coiled-coil conformation. Basic and acidic residues predominate over residues 155–176 (KKYDDDISPSEDKDTDSTKEPL). Residues 155–203 (KKYDDDISPSEDKDTDSTKEPLDDLFPNDEDDPGQGIQQQHSSAAAAAQ) are disordered. Residue S162 is modified to Phosphoserine. Positions 192 to 203 (QQQHSSAAAAAQ) are enriched in low complexity. 5 TPR repeats span residues 213-246 (LRTLHNLVIQYASQGRYEVAVPLCKQALEDLEKT), 255-288 (ATMLNILALVYRDQNKYKDAANLLNDALAIREKT), 297-330 (AATLNNLAVLYGKRGKYKEAEPLCKRALEIREKV), 339-372 (AKQLNNLALLCQNQGKYEEVEYYYQRALEIYQTK), and 381-414 (AKTKNNLASCYLKQGKFKQAETLYKEILTRAHER). Phosphotyrosine is present on Y449. S460 carries the phosphoserine modification. One copy of the TPR 6 repeat lies at 464–497 (TTTLKNLGALYRRQGKFEAAETLEEAAMRSRKQG). 2 positions are modified to phosphoserine; by AMPK: S521 and S524.

It belongs to the kinesin light chain family. As to quaternary structure, oligomeric complex composed of two heavy chains and two light chains. Interacts with SPAG9. Interacts with ATCAY; may link mitochondria to KLC1 and regulate mitochondria localization into neuron projections. Interacts (via TPR repeats) with TOR1A; the interaction associates TOR1A with the kinesin oligomeric complex. Interacts with BORCS5. Interacts with MAPK8IP3/JIP3 and NTRK2/TRKB; interaction with NTRK2/TRKB is mediated by MAPK8IP3/JIP3. Interacts with CLSTN1; phosphorylation at Ser-460 inhibits interaction with CLSTN1. Post-translationally, phosphorylation at Ser-460 by ERK inhibits interaction with CLSTN1 and localization to cytoplasmic vesicles.

The protein resides in the cell projection. It is found in the growth cone. The protein localises to the cytoplasmic vesicle. It localises to the cytoplasm. Its subcellular location is the cytoskeleton. In terms of biological role, kinesin is a microtubule-associated force-producing protein that may play a role in organelle transport. The light chain may function in coupling of cargo to the heavy chain or in the modulation of its ATPase activity. In Pongo abelii (Sumatran orangutan), this protein is Kinesin light chain 1 (KLC1).